A 406-amino-acid polypeptide reads, in one-letter code: Argininosuccinate synthase (406 aa).

ATP is bound by residues 12–20 (AYSGGLDTS) and alanine 39. L-citrulline-binding residues include tyrosine 90 and serine 95. Glycine 120 contacts ATP. Positions 122, 126, and 127 each coordinate L-aspartate. Asparagine 126 is a binding site for L-citrulline. L-citrulline-binding residues include arginine 130, serine 179, serine 188, glutamate 264, and tyrosine 276.

Belongs to the argininosuccinate synthase family. Type 1 subfamily. As to quaternary structure, homotetramer.

It is found in the cytoplasm. It catalyses the reaction L-citrulline + L-aspartate + ATP = 2-(N(omega)-L-arginino)succinate + AMP + diphosphate + H(+). Its pathway is amino-acid biosynthesis; L-arginine biosynthesis; L-arginine from L-ornithine and carbamoyl phosphate: step 2/3. The chain is Argininosuccinate synthase from Geotalea uraniireducens (strain Rf4) (Geobacter uraniireducens).